The following is a 499-amino-acid chain: Bifunctional purine biosynthesis protein PurH (499 aa).

An MGS-like domain is found at 1–144; it reads MIKRALISVF…KNFKDVVVLT (144 aa).

The protein belongs to the PurH family.

It carries out the reaction (6R)-10-formyltetrahydrofolate + 5-amino-1-(5-phospho-beta-D-ribosyl)imidazole-4-carboxamide = 5-formamido-1-(5-phospho-D-ribosyl)imidazole-4-carboxamide + (6S)-5,6,7,8-tetrahydrofolate. It catalyses the reaction IMP + H2O = 5-formamido-1-(5-phospho-D-ribosyl)imidazole-4-carboxamide. It functions in the pathway purine metabolism; IMP biosynthesis via de novo pathway; 5-formamido-1-(5-phospho-D-ribosyl)imidazole-4-carboxamide from 5-amino-1-(5-phospho-D-ribosyl)imidazole-4-carboxamide (10-formyl THF route): step 1/1. The protein operates within purine metabolism; IMP biosynthesis via de novo pathway; IMP from 5-formamido-1-(5-phospho-D-ribosyl)imidazole-4-carboxamide: step 1/1. In Clostridium botulinum (strain Kyoto / Type A2), this protein is Bifunctional purine biosynthesis protein PurH.